The sequence spans 390 residues: tRNA(Met) cytidine acetate ligase (390 aa).

ATP-binding positions include 7–20 (VVEY…HKLH), G101, N162, and R187.

The protein belongs to the TmcAL family.

The protein localises to the cytoplasm. The enzyme catalyses cytidine(34) in elongator tRNA(Met) + acetate + ATP = N(4)-acetylcytidine(34) in elongator tRNA(Met) + AMP + diphosphate. In terms of biological role, catalyzes the formation of N(4)-acetylcytidine (ac(4)C) at the wobble position of elongator tRNA(Met), using acetate and ATP as substrates. First activates an acetate ion to form acetyladenylate (Ac-AMP) and then transfers the acetyl group to tRNA to form ac(4)C34. The polypeptide is tRNA(Met) cytidine acetate ligase (Listeria monocytogenes serotype 4a (strain HCC23)).